We begin with the raw amino-acid sequence, 219 residues long: Octanoyltransferase (219 aa).

Residues 31–206 (DEDVDQIWLV…ELVELLGYDQ (176 aa)) form the BPL/LPL catalytic domain. Substrate is bound by residues 70-77 (RGGQVTYH), 137-139 (SLG), and 150-152 (GLA). Residue Cys-168 is the Acyl-thioester intermediate of the active site.

Belongs to the LipB family.

It localises to the cytoplasm. The enzyme catalyses octanoyl-[ACP] + L-lysyl-[protein] = N(6)-octanoyl-L-lysyl-[protein] + holo-[ACP] + H(+). It participates in protein modification; protein lipoylation via endogenous pathway; protein N(6)-(lipoyl)lysine from octanoyl-[acyl-carrier-protein]: step 1/2. In terms of biological role, catalyzes the transfer of endogenously produced octanoic acid from octanoyl-acyl-carrier-protein onto the lipoyl domains of lipoate-dependent enzymes. Lipoyl-ACP can also act as a substrate although octanoyl-ACP is likely to be the physiological substrate. This Vibrio atlanticus (strain LGP32) (Vibrio splendidus (strain Mel32)) protein is Octanoyltransferase.